Here is a 274-residue protein sequence, read N- to C-terminus: Elongation factor Ts (274 aa).

Residues 79–82 (TDFV) form an involved in Mg(2+) ion dislocation from EF-Tu region.

The protein belongs to the EF-Ts family.

Its subcellular location is the cytoplasm. Its function is as follows. Associates with the EF-Tu.GDP complex and induces the exchange of GDP to GTP. It remains bound to the aminoacyl-tRNA.EF-Tu.GTP complex up to the GTP hydrolysis stage on the ribosome. This Azobacteroides pseudotrichonymphae genomovar. CFP2 protein is Elongation factor Ts.